The following is a 413-amino-acid chain: E3 ubiquitin-protein ligase makorin (413 aa).

2 C3H1-type zinc fingers span residues 2–29 (PRHETDCRYFANGYCSKGNTCTFTHDVA) and 30–57 (TRNENICHFNLVGKCSYGRACRFLHTRP). The disordered stretch occupies residues 61–85 (ELPSCSTPQTSQNQQNLQNSGQRVR). A compositionally biased stretch (low complexity) spans 66–82 (STPQTSQNQQNLQNSGQ). Residues 138–167 (QAQLMMCPYHQKSGDCNRQDMDCPFAHGNY) form a C3H1-type 3 zinc finger. Residues 213–267 (CGICMENIFEKNLRFGILNGCQHCFCLDCIRQWRSKDQENVELATKTVRSCPECR) form an RING-type zinc finger. Residues 296 to 327 (NTKRKICKYYSNERSRGACPFGNKCFYKHQLP) form a C3H1-type 4 zinc finger.

As to quaternary structure, component of a complex at least containing lep-2, lin-28 and the long non-coding RNA lep-5, which mediates the degradation of lin-28. Expressed in seam, tail tip, and other hypodermal cells, head and tail neurons, the pharynx, intestine and the developing hermaphrodite somatic gonad. Not expressed in body wall muscle cells.

The protein resides in the cytoplasm. It carries out the reaction S-ubiquitinyl-[E2 ubiquitin-conjugating enzyme]-L-cysteine + [acceptor protein]-L-lysine = [E2 ubiquitin-conjugating enzyme]-L-cysteine + N(6)-ubiquitinyl-[acceptor protein]-L-lysine.. It participates in protein modification; protein ubiquitination. Its function is as follows. E3 ubiquitin ligase which catalyzes the covalent attachment of ubiquitin moieties onto substrate proteins. Promotes the larval to adult transition by binding to the long non-coding RNA lep-5 to target the heterochronic protein lin-28 for degradation by the proteasome. This association and degradation of lin-28 also controls the timing of the sexual differentiation of individual neurons in males including the AIM, AWA, ADF, ASJ and CEM neurons. Plays a role in governing the developmental timing of male tail tip morphogenesis. Plays a role in two aspects of male mating behavior: response to hermaphrodite contact and vulva location. May play a role in the detection of preferred food sources. The polypeptide is E3 ubiquitin-protein ligase makorin (Caenorhabditis elegans).